The sequence spans 155 residues: Small ribosomal subunit protein uS7c (155 aa).

It belongs to the universal ribosomal protein uS7 family. In terms of assembly, part of the 30S ribosomal subunit.

Its subcellular location is the plastid. The protein resides in the chloroplast. In terms of biological role, one of the primary rRNA binding proteins, it binds directly to 16S rRNA where it nucleates assembly of the head domain of the 30S subunit. The protein is Small ribosomal subunit protein uS7c (rps7) of Saruma henryi (Upright wild ginger).